The primary structure comprises 1313 residues: Histone-lysine N-methyltransferase, H3 lysine-4 specific (1313 aa).

Disordered stretches follow at residues 1-205, 400-458, 555-607, 667-792, 842-908, and 932-982; these read MSRS…DPSR, KKSR…KPRH, GKSS…AKNL, IVFD…AGED, ELPS…SKKQ, and AGIE…DPEL. A compositionally biased stretch (low complexity) spans 7 to 18; sequence ASFAQFFPAAPR. Positions 19 to 31 are enriched in basic and acidic residues; it reads AARDRATERERAR. The span at 70 to 80 shows a compositional bias: polar residues; the sequence is HITSLNHSSSA. Low complexity predominate over residues 105 to 121; sequence SASSHTSTSSSIFSSST. Polar residues-rich tracts occupy residues 130–158 and 174–186; these read SVRN…STSL and NGLT…SATD. Over residues 194-204 the composition is skewed to basic and acidic residues; the sequence is GTERVPPRDPS. Basic and acidic residues predominate over residues 559-607; it reads RSSEDHRRHSYGSEKRPPPEHRQRDDQDRRRRDEEADIEEEKKQRAKNL. Over residues 702 to 716 the composition is skewed to basic residues; it reads RVRKLKSRGVNARKH. Over residues 758-784 the composition is skewed to basic and acidic residues; that stretch reads MIRDTEEPESRPRSRVSSEEDRNKEET. Positions 843-855 are enriched in polar residues; it reads LPSQEQAVESVTP. Basic and acidic residues predominate over residues 868-884; the sequence is ADVKAEPAEDKETEDSR. The segment covering 895-907 has biased composition (basic residues); the sequence is PKKKAKAKKKSKK. Basic and acidic residues predominate over residues 960–978; that stretch reads LETKGEALEAPETESKPDL. The RxxxRR motif signature appears at 1137-1142; the sequence is RVNNRR. Positions 1171–1288 constitute an SET domain; it reads KPVKFARSAI…QNEELTYDYK (118 aa). Residue Y1287 coordinates S-adenosyl-L-methionine. A Post-SET domain is found at 1297–1313; the sequence is DRIPCLCGTAACKGFLN.

This sequence belongs to the class V-like SAM-binding methyltransferase superfamily. As to quaternary structure, component of the Set1C/COMPASS complex.

The protein localises to the nucleus. It is found in the chromosome. It catalyses the reaction L-lysyl(4)-[histone H3] + 3 S-adenosyl-L-methionine = N(6),N(6),N(6)-trimethyl-L-lysyl(4)-[histone H3] + 3 S-adenosyl-L-homocysteine + 3 H(+). It carries out the reaction N(6)-methyl-L-lysyl(4)-[histone H3] + S-adenosyl-L-methionine = N(6),N(6)-dimethyl-L-lysyl(4)-[histone H3] + S-adenosyl-L-homocysteine + H(+). The catalysed reaction is N(6),N(6)-dimethyl-L-lysyl(4)-[histone H3] + S-adenosyl-L-methionine = N(6),N(6),N(6)-trimethyl-L-lysyl(4)-[histone H3] + S-adenosyl-L-homocysteine + H(+). In terms of biological role, catalytic component of the COMPASS (Set1C) complex that specifically mono-, di- and trimethylates histone H3 to form H3K4me1/2/3. Binds RNAs which might negatively affect its histone methyltransferase activity. COMPASS recognizes ubiquitinated H2B on one face of the nucleosome which stimulates the methylation of H3 on the opposing face. This chain is Histone-lysine N-methyltransferase, H3 lysine-4 specific (set-1), found in Neurospora crassa (strain ATCC 24698 / 74-OR23-1A / CBS 708.71 / DSM 1257 / FGSC 987).